The primary structure comprises 483 residues: Protein P55 (483 aa).

The helical transmembrane segment at 342-359 (LTPVMALIIILVYYSIYG) threads the bilayer.

It is found in the host membrane. This Vitis vinifera (Grape) protein is Protein P55.